The sequence spans 414 residues: NAC domain-containing protein 35 (414 aa).

Over residues 1 to 21 the composition is skewed to polar residues; sequence MAIVSSTTSIIPMSNQVNNNE. The segment at 1–47 is disordered; that stretch reads MAIVSSTTSIIPMSNQVNNNEKGIEDNDHRGGQESHVQNEDEADDHD. The segment covering 22–47 has biased composition (basic and acidic residues); sequence KGIEDNDHRGGQESHVQNEDEADDHD. The 148-residue stretch at 51-198 folds into the NAC domain; the sequence is VMPGFRFHPT…EISLCRVYKR (148 aa). A DNA-binding region spans residues 149-204; it reads IGLKKTLVFYSGKAPKGTRTSWIMNEYRLPHHETEKYQKAEISLCRVYKRPGVEDH. The segment at 200 to 251 is disordered; it reads GVEDHPSVPRSLSTRHHNHNSSTSSRLALRQQQHHSSSSNHSDNNLNNNNNI. Positions 233 to 251 are enriched in low complexity; the sequence is HHSSSSNHSDNNLNNNNNI.

Expressed in aerial organs in early stages of seedling development.

The protein resides in the nucleus. Its function is as follows. Transcription factor that acts as a floral repressor. Controls flowering time by negatively regulating CONSTANS (CO) expression in a GIGANTEA (GI)-independent manner. Regulates the plant cold response by positive regulation of the cold response genes COR15A and KIN1. May coordinate cold response and flowering time. This is NAC domain-containing protein 35 from Arabidopsis thaliana (Mouse-ear cress).